Here is a 127-residue protein sequence, read N- to C-terminus: Anti-adapter protein IraD (127 aa).

This sequence belongs to the GpW/Gp25 family. IraD subfamily. Interacts with RssB.

It localises to the cytoplasm. Its function is as follows. Inhibits RpoS proteolysis by regulating RssB activity, thereby increasing the stability of the sigma stress factor RpoS during oxidative stress. Its effect on RpoS stability is due to its interaction with RssB, which probably blocks the interaction of RssB with RpoS, and the consequent delivery of the RssB-RpoS complex to the ClpXP protein degradation pathway. This chain is Anti-adapter protein IraD, found in Escherichia coli (strain SMS-3-5 / SECEC).